Here is a 258-residue protein sequence, read N- to C-terminus: Flagellar L-ring protein (258 aa).

An N-terminal signal peptide occupies residues 1–15; the sequence is MKRIVCLALFLSMTG. Cys-16 is lipidated: N-palmitoyl cysteine. The S-diacylglycerol cysteine moiety is linked to residue Cys-16.

It belongs to the FlgH family. In terms of assembly, the basal body constitutes a major portion of the flagellar organelle and consists of four rings (L,P,S, and M) mounted on a central rod.

Its subcellular location is the cell outer membrane. It is found in the bacterial flagellum basal body. Its function is as follows. Assembles around the rod to form the L-ring and probably protects the motor/basal body from shearing forces during rotation. This Vibrio atlanticus (strain LGP32) (Vibrio splendidus (strain Mel32)) protein is Flagellar L-ring protein.